Consider the following 157-residue polypeptide: Regenerating islet-derived protein 4 (157 aa).

The first 22 residues, 1 to 22, serve as a signal peptide directing secretion; it reads MASKCVRLLLLLSWVAGPEVLS. A disulfide bridge connects residues cysteine 29 and cysteine 40. The region spanning 36–154 is the C-type lectin domain; that stretch reads YRSHCYGYFR…CTKRQHFLCK (119 aa). 3 N-linked (GlcNAc...) asparagine glycosylation sites follow: asparagine 49, asparagine 62, and asparagine 101. Intrachain disulfides connect cysteine 57-cysteine 153 and cysteine 128-cysteine 145. A carbohydrate is bound by residues 97-101 and 134-136; these read DPQKN and KDK.

The protein localises to the secreted. Its function is as follows. Calcium-independent lectin displaying mannose-binding specificity and able to maintain carbohydrate recognition activity in an acidic environment. May be involved in inflammatory and metaplastic responses of the gastrointestinal epithelium. This Rattus norvegicus (Rat) protein is Regenerating islet-derived protein 4 (Reg4).